Here is a 257-residue protein sequence, read N- to C-terminus: Glutamate racemase (257 aa).

Substrate-binding positions include 12–13 and 44–45; these read DS and YG. Residue Cys75 is the Proton donor/acceptor of the active site. Substrate is bound at residue 76–77; it reads NT. Residue Cys185 is the Proton donor/acceptor of the active site. A substrate-binding site is contributed by 186–187; sequence TH.

Belongs to the aspartate/glutamate racemases family.

The catalysed reaction is L-glutamate = D-glutamate. Its pathway is cell wall biogenesis; peptidoglycan biosynthesis. Provides the (R)-glutamate required for cell wall biosynthesis. The protein is Glutamate racemase of Clostridium botulinum (strain Langeland / NCTC 10281 / Type F).